A 491-amino-acid chain; its full sequence is Homeobox protein unplugged (491 aa).

Disordered stretches follow at residues 1–23 (MERP…TKTT), 46–69 (SASA…QEQE), 124–146 (AGKE…PLPH), and 227–329 (FSPA…RRTA). Polar residues predominate over residues 254-264 (GDSSSDISLTL). Over residues 305-316 (GLGGKDSQGNGS) the composition is skewed to gly residues. A DNA-binding region (homeobox) is located at residues 323–382 (SRRRRTAFTSEQLLELEREFHAKKYLSLTERSQIATSLKLSEVQVKIWFQNRRAKWKRVK).

It localises to the nucleus. Its function is as follows. Plays a regulatory role in neural branching of the tracheae: segment-specific aspects of these neural branching patterns appear to be generated by homeotic regulation of expression. The protein is Homeobox protein unplugged of Drosophila pseudoobscura pseudoobscura (Fruit fly).